A 401-amino-acid chain; its full sequence is MSKRSLSSLGAEDLCGKRVLVRVDFNVPLGDEGLITDDTRIRAALPTINDLLDKSARVILSAHFGRPKGQVNETMRLTAVAQRLSELLGKTVVKTESCIGAEAKSKVDAMSNGDVVLLENVRFISGEEKNDTEFAKELASLAEVYVNDAFGAAHRAHASTEGVTKFLSPCVAGYLMEKELKYLQGAIDQPQSPLAAIVGGSKVSSKIGVLESLIDKCDKIIVGGGMIFTFYKARGLSVGNSLVEEDKLELASALEKKAQEKGVEFLLPTDVVLADNFSPDANSKLSKVDAISEGWMGLDIGSESVELFQNALKDCKTVIWNGPMGVFEFEKFANGTNAIANTLAELSAQGCCTIIGGGDSVAAVEKAGLAKKMSHISTGGGASLELLEGKVLPGVSALDDA.

Substrate-binding positions include 24–26 (DFN), Arg40, 63–66 (HFGR), Arg122, and Arg155. Residues Lys206, Gly297, Glu328, and 357–360 (GGDS) contribute to the ATP site.

It belongs to the phosphoglycerate kinase family. Monomer.

It is found in the cytoplasm. The catalysed reaction is (2R)-3-phosphoglycerate + ATP = (2R)-3-phospho-glyceroyl phosphate + ADP. Its pathway is carbohydrate degradation; glycolysis; pyruvate from D-glyceraldehyde 3-phosphate: step 2/5. In Prochlorococcus marinus (strain NATL2A), this protein is Phosphoglycerate kinase.